Consider the following 420-residue polypeptide: Glutamyl-tRNA reductase (420 aa).

Residues 49–52, Ser-107, 112–114, and Gln-118 each bind substrate; these read TCNR and EPQ. The active-site Nucleophile is the Cys-50. 187–192 provides a ligand contact to NADP(+); that stretch reads GAGETI.

This sequence belongs to the glutamyl-tRNA reductase family. Homodimer.

The enzyme catalyses (S)-4-amino-5-oxopentanoate + tRNA(Glu) + NADP(+) = L-glutamyl-tRNA(Glu) + NADPH + H(+). The protein operates within porphyrin-containing compound metabolism; protoporphyrin-IX biosynthesis; 5-aminolevulinate from L-glutamyl-tRNA(Glu): step 1/2. Its function is as follows. Catalyzes the NADPH-dependent reduction of glutamyl-tRNA(Glu) to glutamate 1-semialdehyde (GSA). This chain is Glutamyl-tRNA reductase, found in Nitrosococcus oceani (strain ATCC 19707 / BCRC 17464 / JCM 30415 / NCIMB 11848 / C-107).